The sequence spans 739 residues: Phosphoribosylformylglycinamidine synthase subunit PurL (739 aa).

H54 is a catalytic residue. ATP contacts are provided by Y57 and K96. E98 contacts Mg(2+). Substrate contacts are provided by residues 99–102 (SHNH) and R121. Residue H100 is the Proton acceptor of the active site. D122 contacts Mg(2+). Q245 contributes to the substrate binding site. Residue D275 coordinates Mg(2+). Residue 319–321 (ESQ) participates in substrate binding. ATP-binding residues include D504 and G541. Residue N542 coordinates Mg(2+). S544 is a binding site for substrate.

The protein belongs to the FGAMS family. Monomer. Part of the FGAM synthase complex composed of 1 PurL, 1 PurQ and 2 PurS subunits.

Its subcellular location is the cytoplasm. The catalysed reaction is N(2)-formyl-N(1)-(5-phospho-beta-D-ribosyl)glycinamide + L-glutamine + ATP + H2O = 2-formamido-N(1)-(5-O-phospho-beta-D-ribosyl)acetamidine + L-glutamate + ADP + phosphate + H(+). Its pathway is purine metabolism; IMP biosynthesis via de novo pathway; 5-amino-1-(5-phospho-D-ribosyl)imidazole from N(2)-formyl-N(1)-(5-phospho-D-ribosyl)glycinamide: step 1/2. Part of the phosphoribosylformylglycinamidine synthase complex involved in the purines biosynthetic pathway. Catalyzes the ATP-dependent conversion of formylglycinamide ribonucleotide (FGAR) and glutamine to yield formylglycinamidine ribonucleotide (FGAM) and glutamate. The FGAM synthase complex is composed of three subunits. PurQ produces an ammonia molecule by converting glutamine to glutamate. PurL transfers the ammonia molecule to FGAR to form FGAM in an ATP-dependent manner. PurS interacts with PurQ and PurL and is thought to assist in the transfer of the ammonia molecule from PurQ to PurL. The chain is Phosphoribosylformylglycinamidine synthase subunit PurL from Lactococcus lactis subsp. cremoris (strain SK11).